Here is a 510-residue protein sequence, read N- to C-terminus: uncharacterized protein (510 aa).

This sequence belongs to the phage portal family. PBSX subfamily.

This is an uncharacterized protein from Bacillus subtilis (strain 168).